We begin with the raw amino-acid sequence, 285 residues long: Dihydropteroate synthase (285 aa).

The Pterin-binding domain maps to 25 to 271 (TLVMGILNVT…DVKQIARMAK (247 aa)). Position 32 (Asn-32) interacts with Mg(2+). Residues Thr-72, Asp-106, Asn-125, Asp-189, Lys-225, and 259–261 (RVH) each bind (7,8-dihydropterin-6-yl)methyl diphosphate.

Belongs to the DHPS family. Requires Mg(2+) as cofactor.

It catalyses the reaction (7,8-dihydropterin-6-yl)methyl diphosphate + 4-aminobenzoate = 7,8-dihydropteroate + diphosphate. It functions in the pathway cofactor biosynthesis; tetrahydrofolate biosynthesis; 7,8-dihydrofolate from 2-amino-4-hydroxy-6-hydroxymethyl-7,8-dihydropteridine diphosphate and 4-aminobenzoate: step 1/2. Its function is as follows. Catalyzes the condensation of para-aminobenzoate (pABA) with 6-hydroxymethyl-7,8-dihydropterin diphosphate (DHPt-PP) to form 7,8-dihydropteroate (H2Pte), the immediate precursor of folate derivatives. This Bacillus subtilis (strain 168) protein is Dihydropteroate synthase (sul).